A 431-amino-acid polypeptide reads, in one-letter code: Gamma-glutamyl phosphate reductase (431 aa).

This sequence belongs to the gamma-glutamyl phosphate reductase family.

The protein resides in the cytoplasm. The catalysed reaction is L-glutamate 5-semialdehyde + phosphate + NADP(+) = L-glutamyl 5-phosphate + NADPH + H(+). It participates in amino-acid biosynthesis; L-proline biosynthesis; L-glutamate 5-semialdehyde from L-glutamate: step 2/2. Functionally, catalyzes the NADPH-dependent reduction of L-glutamate 5-phosphate into L-glutamate 5-semialdehyde and phosphate. The product spontaneously undergoes cyclization to form 1-pyrroline-5-carboxylate. This Acaryochloris marina (strain MBIC 11017) protein is Gamma-glutamyl phosphate reductase.